A 118-amino-acid chain; its full sequence is Waprin-Enh1 (118 aa).

The signal sequence occupies residues 1–24; sequence MKTLTGLLLVGLLALWIGLPSTSS. WAP domains lie at 25 to 72 and 74 to 118; these read KILF…RSCR and PPVL…RICK. 8 cysteine pairs are disulfide-bonded: Cys30/Cys63, Cys40/Cys67, Cys50/Cys62, Cys56/Cys71, Cys81/Cys109, Cys88/Cys113, Cys96/Cys108, and Cys102/Cys117.

It belongs to the venom waprin family. Expressed by the venom gland.

It localises to the secreted. Functionally, damages membranes of susceptible bacteria. Has no hemolytic activity. Not toxic to mice. Does not inhibit the proteinases elastase and cathepsin G. The polypeptide is Waprin-Enh1 (Pseudoferania polylepis (Macleay's water snake)).